The following is a 214-amino-acid chain: Phosphoenolpyruvate guanylyltransferase (214 aa).

3 residues coordinate phosphoenolpyruvate: Thr148, Gly163, and Ser166.

The protein belongs to the CofC family.

The enzyme catalyses phosphoenolpyruvate + GTP + H(+) = enolpyruvoyl-2-diphospho-5'-guanosine + diphosphate. It participates in cofactor biosynthesis; coenzyme F420 biosynthesis. Guanylyltransferase that catalyzes the activation of phosphoenolpyruvate (PEP) as enolpyruvoyl-2-diphospho-5'-guanosine, via the condensation of PEP with GTP. It is involved in the biosynthesis of coenzyme F420, a hydride carrier cofactor. The sequence is that of Phosphoenolpyruvate guanylyltransferase from Mycolicibacterium gilvum (strain PYR-GCK) (Mycobacterium gilvum (strain PYR-GCK)).